Here is a 568-residue protein sequence, read N- to C-terminus: Zinc finger protein 76 (568 aa).

Lysine 24 participates in a covalent cross-link: Glycyl lysine isopeptide (Lys-Gly) (interchain with G-Cter in SUMO2). 3 tandem repeats follow at residues 34-45, 62-73, and 88-99. The segment at 34–99 is 3 X 12 AA approximate repeats; it reads IQLEDGTTAY…LEDGSTAYIH (66 aa). 7 C2H2-type zinc fingers span residues 165–189, 195–219, 225–249, 255–279, 285–309, 315–339, and 345–368; these read FRCGYKGCGRLYTTAHHLKVHERAH, YRCDFPSCGKAFATGYGLKSHVRTH, YKCPEELCSKAFKTSGDLQKHVRTH, FRCPFEGCGRSFTTSNIRKVHVRTH, YTCPEPHCGRGFTSATNYKNHVRIH, YVCTVPGCGKRFTEYSSLYKHHVVH, and YTCSSCGKTYRQTSTLAMHKRSAH. A disordered region spans residues 365–401; it reads RSAHGELEATEESEQALYEQQQLEAASAAEESPSPKP. Residues 379–396 are compositionally biased toward low complexity; sequence QALYEQQQLEAASAAEES.

It belongs to the krueppel C2H2-type zinc-finger protein family.

The protein resides in the nucleus. Its function is as follows. May be involved in transcriptional regulation. This is Zinc finger protein 76 (Znf76) from Rattus norvegicus (Rat).